A 350-amino-acid chain; its full sequence is N-acetyl-gamma-glutamyl-phosphate reductase (350 aa).

Cys-154 is an active-site residue.

The protein belongs to the NAGSA dehydrogenase family. Type 1 subfamily.

It localises to the cytoplasm. The enzyme catalyses N-acetyl-L-glutamate 5-semialdehyde + phosphate + NADP(+) = N-acetyl-L-glutamyl 5-phosphate + NADPH + H(+). The protein operates within amino-acid biosynthesis; L-arginine biosynthesis; N(2)-acetyl-L-ornithine from L-glutamate: step 3/4. In terms of biological role, catalyzes the NADPH-dependent reduction of N-acetyl-5-glutamyl phosphate to yield N-acetyl-L-glutamate 5-semialdehyde. This chain is N-acetyl-gamma-glutamyl-phosphate reductase, found in Corynebacterium efficiens (strain DSM 44549 / YS-314 / AJ 12310 / JCM 11189 / NBRC 100395).